Consider the following 98-residue polypeptide: NADH-ubiquinone oxidoreductase chain 4L (98 aa).

The next 3 membrane-spanning stretches (helical) occupy residues 1–21 (MSPL…GLAF), 26–46 (LISA…PLSI), and 56–76 (FALV…TGLA).

It belongs to the complex I subunit 4L family. As to quaternary structure, core subunit of respiratory chain NADH dehydrogenase (Complex I) which is composed of 45 different subunits.

The protein localises to the mitochondrion inner membrane. The enzyme catalyses a ubiquinone + NADH + 5 H(+)(in) = a ubiquinol + NAD(+) + 4 H(+)(out). Its function is as follows. Core subunit of the mitochondrial membrane respiratory chain NADH dehydrogenase (Complex I) which catalyzes electron transfer from NADH through the respiratory chain, using ubiquinone as an electron acceptor. Part of the enzyme membrane arm which is embedded in the lipid bilayer and involved in proton translocation. The polypeptide is NADH-ubiquinone oxidoreductase chain 4L (MT-ND4L) (Gallus gallus (Chicken)).